The following is a 330-amino-acid chain: Aspartate--ammonia ligase (330 aa).

This sequence belongs to the class-II aminoacyl-tRNA synthetase family. AsnA subfamily.

The protein resides in the cytoplasm. The enzyme catalyses L-aspartate + NH4(+) + ATP = L-asparagine + AMP + diphosphate + H(+). It functions in the pathway amino-acid biosynthesis; L-asparagine biosynthesis; L-asparagine from L-aspartate (ammonia route): step 1/1. The chain is Aspartate--ammonia ligase from Salmonella agona (strain SL483).